The sequence spans 312 residues: 2,3-dihydroxyphenylpropionate/2,3-dihydroxicinnamic acid 1,2-dioxygenase 1 (312 aa).

The active-site Proton donor is histidine 115. Residue histidine 179 is the Proton acceptor of the active site.

This sequence belongs to the LigB/MhpB extradiol dioxygenase family. As to quaternary structure, homotetramer. Requires Fe(2+) as cofactor.

It carries out the reaction 3-(2,3-dihydroxyphenyl)propanoate + O2 = (2Z,4E)-2-hydroxy-6-oxonona-2,4-dienedioate + H(+). It catalyses the reaction (2E)-3-(2,3-dihydroxyphenyl)prop-2-enoate + O2 = (2Z,4E,7E)-2-hydroxy-6-oxonona-2,4,7-trienedioate + H(+). It functions in the pathway aromatic compound metabolism; 3-phenylpropanoate degradation. Catalyzes the non-heme iron(II)-dependent oxidative cleavage of 2,3-dihydroxyphenylpropionic acid and 2,3-dihydroxicinnamic acid into 2-hydroxy-6-ketononadienedioate and 2-hydroxy-6-ketononatrienedioate, respectively. In Dechloromonas aromatica (strain RCB), this protein is 2,3-dihydroxyphenylpropionate/2,3-dihydroxicinnamic acid 1,2-dioxygenase 1.